Consider the following 205-residue polypeptide: Ribosomal RNA small subunit methyltransferase G (205 aa).

S-adenosyl-L-methionine contacts are provided by residues Gly73, Leu78, 124-125 (VE), and Arg138.

It belongs to the methyltransferase superfamily. RNA methyltransferase RsmG family.

The protein resides in the cytoplasm. The catalysed reaction is guanosine(527) in 16S rRNA + S-adenosyl-L-methionine = N(7)-methylguanosine(527) in 16S rRNA + S-adenosyl-L-homocysteine. Specifically methylates the N7 position of guanine in position 527 of 16S rRNA. In Actinobacillus pleuropneumoniae serotype 7 (strain AP76), this protein is Ribosomal RNA small subunit methyltransferase G.